Reading from the N-terminus, the 212-residue chain is Thiamine-phosphate synthase (212 aa).

Residues 40–44 (QFREK) and Asn-75 contribute to the 4-amino-2-methyl-5-(diphosphooxymethyl)pyrimidine site. Mg(2+) contacts are provided by Asp-76 and Asp-95. A 4-amino-2-methyl-5-(diphosphooxymethyl)pyrimidine-binding site is contributed by Ser-113. 139–141 (TSS) lines the 2-[(2R,5Z)-2-carboxy-4-methylthiazol-5(2H)-ylidene]ethyl phosphate pocket. Position 142 (Lys-142) interacts with 4-amino-2-methyl-5-(diphosphooxymethyl)pyrimidine. 2-[(2R,5Z)-2-carboxy-4-methylthiazol-5(2H)-ylidene]ethyl phosphate is bound by residues Gly-171 and 191 to 192 (IS).

The protein belongs to the thiamine-phosphate synthase family. Mg(2+) is required as a cofactor.

It catalyses the reaction 2-[(2R,5Z)-2-carboxy-4-methylthiazol-5(2H)-ylidene]ethyl phosphate + 4-amino-2-methyl-5-(diphosphooxymethyl)pyrimidine + 2 H(+) = thiamine phosphate + CO2 + diphosphate. It carries out the reaction 2-(2-carboxy-4-methylthiazol-5-yl)ethyl phosphate + 4-amino-2-methyl-5-(diphosphooxymethyl)pyrimidine + 2 H(+) = thiamine phosphate + CO2 + diphosphate. The enzyme catalyses 4-methyl-5-(2-phosphooxyethyl)-thiazole + 4-amino-2-methyl-5-(diphosphooxymethyl)pyrimidine + H(+) = thiamine phosphate + diphosphate. It participates in cofactor biosynthesis; thiamine diphosphate biosynthesis; thiamine phosphate from 4-amino-2-methyl-5-diphosphomethylpyrimidine and 4-methyl-5-(2-phosphoethyl)-thiazole: step 1/1. Its function is as follows. Condenses 4-methyl-5-(beta-hydroxyethyl)thiazole monophosphate (THZ-P) and 2-methyl-4-amino-5-hydroxymethyl pyrimidine pyrophosphate (HMP-PP) to form thiamine monophosphate (TMP). In Staphylococcus epidermidis (strain ATCC 35984 / DSM 28319 / BCRC 17069 / CCUG 31568 / BM 3577 / RP62A), this protein is Thiamine-phosphate synthase.